A 448-amino-acid chain; its full sequence is Phosphoglucosamine mutase (448 aa).

The Phosphoserine intermediate role is filled by Ser-108. 4 residues coordinate Mg(2+): Ser-108, Asp-247, Asp-249, and Asp-251. At Ser-108 the chain carries Phosphoserine.

Belongs to the phosphohexose mutase family. Mg(2+) serves as cofactor. In terms of processing, activated by phosphorylation.

It catalyses the reaction alpha-D-glucosamine 1-phosphate = D-glucosamine 6-phosphate. Functionally, catalyzes the conversion of glucosamine-6-phosphate to glucosamine-1-phosphate. This is Phosphoglucosamine mutase from Herminiimonas arsenicoxydans.